The following is a 349-amino-acid chain: tRNA-specific 2-thiouridylase MnmA (349 aa).

Residues 7-14 (GLSGGVDS) and Leu-33 each bind ATP. Cys-94 (nucleophile) is an active-site residue. A disulfide bridge connects residues Cys-94 and Cys-193. Position 119 (Gly-119) interacts with ATP. Residues 143–145 (KDQ) form an interaction with tRNA region. Cys-193 acts as the Cysteine persulfide intermediate in catalysis. The segment at 298–299 (RY) is interaction with tRNA.

Belongs to the MnmA/TRMU family.

It is found in the cytoplasm. It carries out the reaction S-sulfanyl-L-cysteinyl-[protein] + uridine(34) in tRNA + AH2 + ATP = 2-thiouridine(34) in tRNA + L-cysteinyl-[protein] + A + AMP + diphosphate + H(+). In terms of biological role, catalyzes the 2-thiolation of uridine at the wobble position (U34) of tRNA, leading to the formation of s(2)U34. The protein is tRNA-specific 2-thiouridylase MnmA of Gloeothece citriformis (strain PCC 7424) (Cyanothece sp. (strain PCC 7424)).